A 261-amino-acid polypeptide reads, in one-letter code: Tryptophan synthase alpha chain (261 aa).

Residues Glu-49 and Asp-60 each act as proton acceptor in the active site.

It belongs to the TrpA family. As to quaternary structure, tetramer of two alpha and two beta chains.

The catalysed reaction is (1S,2R)-1-C-(indol-3-yl)glycerol 3-phosphate + L-serine = D-glyceraldehyde 3-phosphate + L-tryptophan + H2O. Its pathway is amino-acid biosynthesis; L-tryptophan biosynthesis; L-tryptophan from chorismate: step 5/5. Its function is as follows. The alpha subunit is responsible for the aldol cleavage of indoleglycerol phosphate to indole and glyceraldehyde 3-phosphate. This is Tryptophan synthase alpha chain from Roseiflexus castenholzii (strain DSM 13941 / HLO8).